The chain runs to 251 residues: MKERIHEYCHRLHLPVMAERWSAMAEYASTHNISYSEFLFRLLEAEIVEKQARSIQTLIKLSKLPYRKTIDTFDFTAQPSVDERRIRELLTLSFIDRKENILFLGPPGIGKTHLAISIGMEAIARGYKTYFITAHDLVNQLRRADQEGKLEKKLRVFVKPTVLIIDEMGYLKLDPNSAHYLFQVIARRYEHAPIILTSNKSFGEWGEIVGDSVLATAMLDRLLHHSIIFNLKGESYRLREKRLQEEKQKDQ.

Gly105–Thr112 serves as a coordination point for ATP.

It belongs to the IS21/IS1162 putative ATP-binding protein family.

This is Insertion sequence IS5376 putative ATP-binding protein from Geobacillus stearothermophilus (Bacillus stearothermophilus).